The sequence spans 121 residues: Dihydroneopterin aldolase (121 aa).

Residues E25 and M114 each contribute to the substrate site.

It belongs to the archaeal dihydroneopterin aldolase family. Homotetramer.

The enzyme catalyses 7,8-dihydroneopterin = 6-hydroxymethyl-7,8-dihydropterin + glycolaldehyde. It participates in cofactor biosynthesis; 5,6,7,8-tetrahydromethanopterin biosynthesis. Functionally, catalyzes the conversion of 7,8-dihydroneopterin (H2Neo) to 6-hydroxymethyl-7,8-dihydropterin (6-HMD). The sequence is that of Dihydroneopterin aldolase from Methanocaldococcus jannaschii (strain ATCC 43067 / DSM 2661 / JAL-1 / JCM 10045 / NBRC 100440) (Methanococcus jannaschii).